The sequence spans 372 residues: Signal peptide peptidase-like 1 (372 aa).

The Lumenal segment spans residues 1–6; sequence METLWT. Residues 7 to 27 traverse the membrane as a helical segment; it reads LLYLLEPAPATLIVTAVTVTF. At 28 to 54 the chain is on the cytoplasmic side; sequence ASAFRALNYGKEMERNRDFSEASITLD. A helical transmembrane segment spans residues 55 to 77; it reads SSQALMIPVMSSCSLLLMFYLFS. The Lumenal portion of the chain corresponds to 78–81; the sequence is SVSQ. Residues 82–104 traverse the membrane as a helical segment; it reads LLTAFTAIASVSSLFYWLSPYAV. Topologically, residues 105-123 are cytoplasmic; it reads YMKTQLGLSDPFLSRCCSK. The chain crosses the membrane as a helical span at residues 124–146; that stretch reads SFTRIQGLLLVACAMTVVAWLIS. Topologically, residues 147-149 are lumenal; sequence GHW. The helical transmembrane segment at 150 to 167 threads the bilayer; sequence VLNNLLGISICIAFVSHV. The Cytoplasmic segment spans residues 168–171; the sequence is RLPN. The chain crosses the membrane as a helical span at residues 172-192; it reads IKICAMLLVCLFVYDIFWVFF. Aspartate 186 is a catalytic residue. Residues 193–257 lie on the Lumenal side of the membrane; sequence SERFFGANVM…GVVPGVSASD (65 aa). A helical transmembrane segment spans residues 258 to 278; the sequence is FMMLGLGDMAIPAMLLALVLC. Residue aspartate 265 is part of the active site. Residues 279 to 301 are Cytoplasmic-facing; it reads FDHRKTRDVVNIFDLKSSKGHKY. A helical transmembrane segment spans residues 302–322; that stretch reads IWYALPGYAIGLVAALAAGVL. At 323 to 325 the chain is on the lumenal side; that stretch reads THS. Residues 326–346 form a helical membrane-spanning segment; that stretch reads PQPALLYLVPSTLGPVIFMSW. Positions 328–330 match the PAL motif; that stretch reads PAL. Over 347–372 the chain is Cytoplasmic; that stretch reads RRKDLAELWEGPALSNPIEKSHEIEI.

This sequence belongs to the peptidase A22B family. As to expression, ubiquitous.

The protein localises to the endosome membrane. Its function is as follows. Intramembrane-cleaving aspartic protease (I-CLiP) that cleaves type II membrane signal peptides in the hydrophobic plane of the membrane. This Arabidopsis thaliana (Mouse-ear cress) protein is Signal peptide peptidase-like 1 (SPPL1).